A 530-amino-acid polypeptide reads, in one-letter code: UDP-N-acetylmuramoyl-L-alanyl-D-glutamate--2,6-diaminopimelate ligase (530 aa).

Residue L52 coordinates UDP-N-acetyl-alpha-D-muramoyl-L-alanyl-D-glutamate. 139–145 (GTSGKTT) is an ATP binding site. Residues 181 to 182 (TT), S208, and R216 each bind UDP-N-acetyl-alpha-D-muramoyl-L-alanyl-D-glutamate. At K248 the chain carries N6-carboxylysine. Meso-2,6-diaminopimelate contacts are provided by residues R410, 434-437 (DNPR), G488, and E492. The short motif at 434–437 (DNPR) is the Meso-diaminopimelate recognition motif element.

Belongs to the MurCDEF family. MurE subfamily. It depends on Mg(2+) as a cofactor. In terms of processing, carboxylation is probably crucial for Mg(2+) binding and, consequently, for the gamma-phosphate positioning of ATP.

Its subcellular location is the cytoplasm. The catalysed reaction is UDP-N-acetyl-alpha-D-muramoyl-L-alanyl-D-glutamate + meso-2,6-diaminopimelate + ATP = UDP-N-acetyl-alpha-D-muramoyl-L-alanyl-gamma-D-glutamyl-meso-2,6-diaminopimelate + ADP + phosphate + H(+). The protein operates within cell wall biogenesis; peptidoglycan biosynthesis. Catalyzes the addition of meso-diaminopimelic acid to the nucleotide precursor UDP-N-acetylmuramoyl-L-alanyl-D-glutamate (UMAG) in the biosynthesis of bacterial cell-wall peptidoglycan. The protein is UDP-N-acetylmuramoyl-L-alanyl-D-glutamate--2,6-diaminopimelate ligase of Mycobacterium leprae (strain TN).